The following is a 360-amino-acid chain: Small ribosomal subunit protein mS22 (360 aa).

Ser-54 is subject to Phosphoserine. At Lys-211 the chain carries N6-acetyllysine.

It belongs to the mitochondrion-specific ribosomal protein mS22 family. In terms of assembly, component of the mitochondrial small ribosomal subunit (mt-SSU). Mature mammalian 55S mitochondrial ribosomes consist of a small (28S) and a large (39S) subunit. The 28S small subunit contains a 12S ribosomal RNA (12S mt-rRNA) and 30 different proteins. The 39S large subunit contains a 16S rRNA (16S mt-rRNA), a copy of mitochondrial valine transfer RNA (mt-tRNA(Val)), which plays an integral structural role, and 52 different proteins.

It is found in the mitochondrion. The polypeptide is Small ribosomal subunit protein mS22 (MRPS22) (Homo sapiens (Human)).